The chain runs to 72 residues: UPF0270 protein YheU (72 aa).

Belongs to the UPF0270 family.

The polypeptide is UPF0270 protein YheU (Escherichia coli (strain ATCC 8739 / DSM 1576 / NBRC 3972 / NCIMB 8545 / WDCM 00012 / Crooks)).